We begin with the raw amino-acid sequence, 140 residues long: MSMKYLMLLFAAMIIRSFADSGNAIETTSPEITNATTDIPAIRLCGPEGDGYCLHGDCIHARDIDGMYCRCSHGYTGIRCQHVVLVDYQRSENPNTTTSYIPSPGIMLVLVGIIIITCCLLSVYRFTRRTKLPIQDMVVP.

The N-terminal stretch at 1–18 is a signal peptide; the sequence is MSMKYLMLLFAAMIIRSF. Topologically, residues 19–100 are extracellular; that stretch reads ADSGNAIETT…SENPNTTTSY (82 aa). Asn34 carries an N-linked (GlcNAc...) asparagine; by host glycan. The EGF-like domain maps to 41 to 81; it reads AIRLCGPEGDGYCLHGDCIHARDIDGMYCRCSHGYTGIRCQ. Disulfide bonds link Cys45–Cys58, Cys53–Cys69, and Cys71–Cys80. An N-linked (GlcNAc...) asparagine; by host glycan is attached at Asn95. The chain crosses the membrane as a helical span at residues 101–121; the sequence is IPSPGIMLVLVGIIIITCCLL. At 122 to 140 the chain is on the cytoplasmic side; the sequence is SVYRFTRRTKLPIQDMVVP.

The protein belongs to the orthopoxvirus OPG019 family. Viral epidermal growth factor interacts with host EGFR and promotes EGFR dimerization. Post-translationally, cleaved at the cell surface by host ADAM10, thereby releasing the secreted form of VGF.

The protein resides in the host membrane. Its subcellular location is the secreted. Functionally, stimulates cellular proliferation (hyperplasia)and mobility around infected cells to promote rapid and efficient spread of infection. This effect is beneficial for virus replication in vivo, because poxviruses replicate possibly better in proliferating cells than in quiescent cells. Acts by binding host EGFR, inducing its dimerization, autophosphorylation and leading to activation of several cellular pathways regulating cell proliferation or cell survival. The activation by host EGFR of mitogen activated protein kinases (MAPK) and extracellular-signal regulated kinases (ERK) are essential for the positive effect of vaccinia growth factor on poxvirus virulence in vivo. The chain is Pro-Viral epidermal growth factor (OPG019) from Bos taurus (Bovine).